A 54-amino-acid chain; its full sequence is UPF0391 membrane protein Pmen_0080 (54 aa).

Transmembrane regions (helical) follow at residues 4-24 (WALT…GGIA) and 28-48 (AGIA…SFIM).

Belongs to the UPF0391 family.

Its subcellular location is the cell membrane. The polypeptide is UPF0391 membrane protein Pmen_0080 (Ectopseudomonas mendocina (strain ymp) (Pseudomonas mendocina)).